A 159-amino-acid chain; its full sequence is 2-C-methyl-D-erythritol 2,4-cyclodiphosphate synthase (159 aa).

The a divalent metal cation site is built by Asp-9 and His-11. Residues Asp-9–His-11 and His-35–Ser-36 contribute to the 4-CDP-2-C-methyl-D-erythritol 2-phosphate site. His-43 is a binding site for a divalent metal cation. 4-CDP-2-C-methyl-D-erythritol 2-phosphate contacts are provided by residues Asp-57–Gly-59, Phe-62–Asp-66, Thr-133–Glu-136, Phe-140, and Arg-143.

The protein belongs to the IspF family. Homotrimer. It depends on a divalent metal cation as a cofactor.

It catalyses the reaction 4-CDP-2-C-methyl-D-erythritol 2-phosphate = 2-C-methyl-D-erythritol 2,4-cyclic diphosphate + CMP. Its pathway is isoprenoid biosynthesis; isopentenyl diphosphate biosynthesis via DXP pathway; isopentenyl diphosphate from 1-deoxy-D-xylulose 5-phosphate: step 4/6. Involved in the biosynthesis of isopentenyl diphosphate (IPP) and dimethylallyl diphosphate (DMAPP), two major building blocks of isoprenoid compounds. Catalyzes the conversion of 4-diphosphocytidyl-2-C-methyl-D-erythritol 2-phosphate (CDP-ME2P) to 2-C-methyl-D-erythritol 2,4-cyclodiphosphate (ME-CPP) with a corresponding release of cytidine 5-monophosphate (CMP). This is 2-C-methyl-D-erythritol 2,4-cyclodiphosphate synthase from Shouchella clausii (strain KSM-K16) (Alkalihalobacillus clausii).